The following is a 471-amino-acid chain: Amidophosphoribosyltransferase (471 aa).

Cysteine 2 (nucleophile) is an active-site residue. The region spanning 2-224 (CGIFGIYSYE…PGEIIEIKDG (223 aa)) is the Glutamine amidotransferase type-2 domain. Cysteine 255 provides a ligand contact to [4Fe-4S] cluster. 3 residues coordinate Mg(2+): serine 302, aspartate 364, and aspartate 365. [4Fe-4S] cluster-binding residues include cysteine 401, cysteine 450, and cysteine 453.

The protein in the C-terminal section; belongs to the purine/pyrimidine phosphoribosyltransferase family. The cofactor is Mg(2+). [4Fe-4S] cluster is required as a cofactor.

It catalyses the reaction 5-phospho-beta-D-ribosylamine + L-glutamate + diphosphate = 5-phospho-alpha-D-ribose 1-diphosphate + L-glutamine + H2O. It functions in the pathway purine metabolism; IMP biosynthesis via de novo pathway; N(1)-(5-phospho-D-ribosyl)glycinamide from 5-phospho-alpha-D-ribose 1-diphosphate: step 1/2. Functionally, catalyzes the formation of phosphoribosylamine from phosphoribosylpyrophosphate (PRPP) and glutamine. This is Amidophosphoribosyltransferase from Methanocaldococcus jannaschii (strain ATCC 43067 / DSM 2661 / JAL-1 / JCM 10045 / NBRC 100440) (Methanococcus jannaschii).